We begin with the raw amino-acid sequence, 2253 residues long: Genome polyprotein (2253 aa).

Cysteine 627 and cysteine 694 form a disulfide bridge. Positions 750–752 (RVD) match the Cell attachment site motif. The LRAT domain occupies 825 to 920 (LVYKNRGFYK…LFPGRKEITQ (96 aa)). Residues histidine 835 and histidine 846 each act as for protein 2A H-NC in the active site. The For protein 2A H-NC; Acyl-thioester intermediate role is filled by cysteine 904. Residues 1002–1022 (IVLYCHAPNMLTTMCLGTLLV) traverse the membrane as a helical segment. The region spanning 1205–1366 (YSEMMRVNVR…ASYSRNNKLD (162 aa)) is the SF3 helicase domain. The residue at position 1559 (tyrosine 1559) is an O-(5'-phospho-RNA)-tyrosine. A Peptidase C3 domain is found at 1586–1775 (APYMQDLEHC…RAAAVHFISN (190 aa)). Residues histidine 1626, aspartate 1664, and cysteine 1739 each act as for protease 3C activity in the active site. Cysteine 1970 acts as the Acyl-thioester intermediate in catalysis. Positions 2018–2132 (PYNYGLDYSS…SVSSPLDAEY (115 aa)) constitute a RdRp catalytic domain. Aspartate 2024 and aspartate 2118 together coordinate Mg(2+).

This sequence belongs to the picornaviruses polyprotein family. Interacts with capsid protein VP1 and capsid protein VP3 to form heterotrimeric protomers. Five protomers subsequently associate to form pentamers which serve as building blocks for the capsid. In terms of assembly, interacts with capsid protein VP0, and capsid protein VP3 to form heterotrimeric protomers. Five protomers subsequently associate to form pentamers which serve as building blocks for the capsid. As to quaternary structure, interacts with capsid protein VP0 and capsid protein VP1 to form heterotrimeric protomers. Five protomers subsequently associate to form pentamers which serve as building blocks for the capsid. Homohexamer; forms a hexameric ring structure with 6-fold symmetry characteristic of AAA+ ATPases. In terms of assembly, homodimer. Interacts with host ACBD3. As to quaternary structure, interacts with RNA-directed RNA polymerase. Interacts with Viral protein genome-linked. Requires Mg(2+) as cofactor. Post-translationally, VPg is uridylylated by the polymerase and is covalently linked to the 5'-end of genomic RNA. This uridylylated form acts as a nucleotide-peptide primer for the polymerase. In terms of processing, specific enzymatic cleavages yield mature proteins. All cleavages are catalyzed by P3C.

Its subcellular location is the virion. The protein resides in the host cytoplasm. It localises to the host nucleus. The protein localises to the host nucleolus. It is found in the host cytoplasmic vesicle membrane. Its subcellular location is the host endoplasmic reticulum membrane. The protein resides in the host Golgi apparatus membrane. The enzyme catalyses RNA(n) + a ribonucleoside 5'-triphosphate = RNA(n+1) + diphosphate. The catalysed reaction is a ribonucleoside 5'-triphosphate + H2O = a ribonucleoside 5'-diphosphate + phosphate + H(+). It catalyses the reaction Selective cleavage of Gln-|-Gly bond in the poliovirus polyprotein. In other picornavirus reactions Glu may be substituted for Gln, and Ser or Thr for Gly.. Its function is as follows. Forms an icosahedral capsid of pseudo T=3 symmetry together with capsid proteins VP1 and VP3. The capsid is 300 Angstroms in diameter, composed of 60 copies of each capsid protein and enclosing the viral positive strand RNA genome. The attachment to the host cell receptor induces virion internalization predominantly through clathrin-mediated endocytosis. Binds packaging signals present in the viral RNA. Forms an icosahedral capsid of pseudo T=3 symmetry together with capsid proteins VP0 and VP1. The capsid is 300 Angstroms in diameter, composed of 60 copies of each capsid protein and enclosing the viral positive strand RNA genome. The attachment to the host cell receptor induces virion internalization predominantly through clathrin-mediated endocytosis. Binds packaging signals present in the viral RNA. In terms of biological role, forms an icosahedral capsid of pseudo T=3 symmetry together with capsid proteins VP0 and VP3. The capsid is 300 Angstroms in diameter, composed of 60 copies of each capsid protein and enclosing the viral positive strand RNA genome. The attachment to the host cell receptor induces virion internalization predominantly through clathrin-mediated endocytosis. Binds packaging signals present in the viral RNA. Functionally, mediates self-processing of the polyprotein by a translational effect termed 'ribosome skipping'. Mechanistically, 2A1-mediated cleavage occurs between the C-terminal glycine and the proline of the downstream protein 2A2. Its function is as follows. Plays an essential role in the virus replication cycle by acting as a viroporin. Creates a pore in the host endoplasmic reticulum and as a consequence releases Ca2+ in the cytoplasm of infected cell. In turn, high levels of cytoplasmic calcium may trigger membrane trafficking and transport of viral ER-associated proteins to viroplasms, sites of viral genome replication. Induces and associates with structural rearrangements of intracellular membranes. Displays RNA-binding, nucleotide binding and NTPase activities. May play a role in virion morphogenesis and viral RNA encapsidation by interacting with the capsid protein VP3. In terms of biological role, localizes the viral replication complex to the surface of membranous vesicles. It inhibits host cell endoplasmic reticulum-to-Golgi apparatus transport and causes the disassembly of the Golgi complex, possibly through GBF1 interaction. This would result in depletion of MHC, trail receptors and IFN receptors at the host cell surface. Plays an essential role in viral RNA replication by recruiting ACBD3 and PI4KB at the viral replication sites, thereby allowing the formation of the rearranged membranous structures where viral replication takes place. Functionally, acts as a primer for viral RNA replication and remains covalently bound to viral genomic RNA. VPg is uridylylated prior to priming replication into VPg-pUpU. The VPg-pUpU is then used as primer on the genomic RNA poly(A) by the RNA-dependent RNA polymerase to replicate the viral genome. Following genome release from the infecting virion in the cytoplasm, the VPg-RNA linkage is probably removed by host TDP2. During the late stage of the replication cycle, host TDP2 is excluded from sites of viral RNA synthesis and encapsidation, allowing for the generation of progeny virions. Its function is as follows. Cysteine protease that generates mature viral proteins from the precursor polyprotein. In addition to its proteolytic activity, it binds to viral RNA, and thus influences viral genome replication. RNA and substrate bind cooperatively to the protease. Replicates the viral genomic RNA on the surface of intracellular membranes. Covalently attaches UMP to a tyrosine of VPg, which is used to prime RNA synthesis. The positive stranded RNA genome is first replicated at virus induced membranous vesicles, creating a dsRNA genomic replication form. This dsRNA is then used as template to synthesize positive stranded RNA genomes. ss(+)RNA genomes are either translated, replicated or encapsidated. The polypeptide is Genome polyprotein (Ljunganvirus 1 (LV)).